A 397-amino-acid polypeptide reads, in one-letter code: uncharacterized protein (397 aa).

A run of 9 helical transmembrane segments spans residues 1 to 21, 39 to 59, 76 to 96, 103 to 123, 124 to 144, 194 to 214, 219 to 239, 255 to 275, and 301 to 321; these read MGAS…LMLV, VIQS…VVVF, EALS…FGVP, VLLF…FVGA, ALIE…LVMA, MMTP…LFAF, ALFG…FSLL, LVYL…KLML, and QSLT…FWSA.

Belongs to the TerC family.

The protein localises to the cell membrane. This is an uncharacterized protein from Mycobacterium tuberculosis (strain CDC 1551 / Oshkosh).